Here is a 287-residue protein sequence, read N- to C-terminus: ADP-dependent (S)-NAD(P)H-hydrate dehydratase (287 aa).

Residues 7 to 283 form the YjeF C-terminal domain; that stretch reads TTALVKKFIP…PEISTVMKPF (277 aa). Residues alanine 42 and histidine 159 each coordinate (6S)-NADPHX. AMP contacts are provided by residues 196–200 and glycine 224; that span reads KGSTD. Aspartate 225 serves as a coordination point for (6S)-NADPHX.

Belongs to the NnrD/CARKD family. As to quaternary structure, homotetramer. Mg(2+) serves as cofactor.

It catalyses the reaction (6S)-NADHX + ADP = AMP + phosphate + NADH + H(+). The enzyme catalyses (6S)-NADPHX + ADP = AMP + phosphate + NADPH + H(+). In terms of biological role, catalyzes the dehydration of the S-form of NAD(P)HX at the expense of ADP, which is converted to AMP. Together with NAD(P)HX epimerase, which catalyzes the epimerization of the S- and R-forms, the enzyme allows the repair of both epimers of NAD(P)HX, a damaged form of NAD(P)H that is a result of enzymatic or heat-dependent hydration. The protein is ADP-dependent (S)-NAD(P)H-hydrate dehydratase of Nitrosopumilus maritimus (strain SCM1).